The following is a 574-amino-acid chain: Protein misato (574 aa).

This sequence belongs to the misato family.

It is found in the mitochondrion. This Drosophila melanogaster (Fruit fly) protein is Protein misato (mst).